The chain runs to 827 residues: Glycerol-3-phosphate acyltransferase (827 aa).

An HXXXXD motif motif is present at residues 325 to 330; it reads CHRSHM.

Belongs to the GPAT/DAPAT family.

It is found in the cell inner membrane. The enzyme catalyses sn-glycerol 3-phosphate + an acyl-CoA = a 1-acyl-sn-glycero-3-phosphate + CoA. It functions in the pathway phospholipid metabolism; CDP-diacylglycerol biosynthesis; CDP-diacylglycerol from sn-glycerol 3-phosphate: step 1/3. The chain is Glycerol-3-phosphate acyltransferase from Shigella boydii serotype 4 (strain Sb227).